The chain runs to 697 residues: MIPPQEASARRREIEDKLKQEEETLSFIRDSLEKSDQLTRNMVSILSSFESRLMKLENSIIPVHKQTENLQRLQENVEKTLSCLDHVISYYHVASDTEKIIREGPTGRLEEYLGSMAKIQKAVEYFQDNSPDSPELNKVKLLFERGKESLESEFRSLMTRHSKVVSPVLLLDLISADDELEVQEDVVLEHLPESVLRDVVRISRWLVEYGRNQDFMNVYYQIRSSQLDRSIKGLKEHFRKSSSSSGVPYSPAIPNKRKDTPTKKPIKRPGTIRKAQNLLKQYSQHGLDGKKGGSNLIPLEGRDDMLDVETDAYIHCVSAFVKLAQSEYRLLMEIIPEHHQKKTFDSLIQDALDGLMLEGENIVSAARKAIIRHDFSTVLTVFPILRHLKQTKPEFDQVLQGTAASTKNKLPGLITSMETIGAKALEDFADNIKNDPDKEYNMPKDGTVHELTSNAILFLQQLLDFQETAGAMLASQVLGDTYNIPLDPRETSSSATSYSSEFSKRLLSTYICKVLGNLQLNLLSKSKVYEDPALSAIFLHNNYNYILKSLEKSELIQLVAVTQKTAERSYREHIEQQIQTYQRSWLKVTDYIAEKNLPVFQPGVKLRDKERQMIKERFKGFNDGLEELCKIQKVWAIPDTEQRDKIRQAQKDIVKETYGAFLHRYGSVPFTKNPEKYIKYRVEQVGDMIDRLFDTSA.

Residues 1 to 384 form an SEC8 and ARHQ binding region; it reads MIPPQEASAR…FSTVLTVFPI (384 aa). Coiled coils occupy residues 5 to 42 and 63 to 85; these read QEAS…TRNM and VHKQ…SCLD. Ser-133 is modified (phosphoserine). The tract at residues 238–270 is disordered; that stretch reads FRKSSSSSGVPYSPAIPNKRKDTPTKKPIKRPG.

It belongs to the EXO70 family. In terms of assembly, the exocyst complex is composed of EXOC1, EXOC2, EXOC3, EXOC4, EXOC5, EXOC6, EXOC7 and EXOC8. Interacts with RAB11FIP3. Interacts with ARHQ in a GTP-dependent manner.

It localises to the cytoplasm. It is found in the cytosol. Its subcellular location is the cell membrane. The protein resides in the midbody. The protein localises to the midbody ring. Functionally, component of the exocyst complex involved in the docking of exocytic vesicles with fusion sites on the plasma membrane. In adipocytes, plays a crucial role in targeting SLC2A4 vesicle to the plasma membrane in response to insulin, perhaps directing the vesicle to the precise site of fusion. It is required for neuron survival and plays an essential role in cortical development. This chain is Exocyst complex component 7 (Exoc7), found in Mus musculus (Mouse).